The primary structure comprises 631 residues: 1-deoxy-D-xylulose-5-phosphate synthase (631 aa).

Residues histidine 74 and 115-117 (GHS) each bind thiamine diphosphate. Residue aspartate 146 coordinates Mg(2+). Thiamine diphosphate-binding positions include 147-148 (GA), asparagine 175, tyrosine 286, and glutamate 368. Residue asparagine 175 coordinates Mg(2+).

The protein belongs to the transketolase family. DXPS subfamily. Homodimer. Mg(2+) serves as cofactor. Thiamine diphosphate is required as a cofactor.

The enzyme catalyses D-glyceraldehyde 3-phosphate + pyruvate + H(+) = 1-deoxy-D-xylulose 5-phosphate + CO2. It functions in the pathway metabolic intermediate biosynthesis; 1-deoxy-D-xylulose 5-phosphate biosynthesis; 1-deoxy-D-xylulose 5-phosphate from D-glyceraldehyde 3-phosphate and pyruvate: step 1/1. Catalyzes the acyloin condensation reaction between C atoms 2 and 3 of pyruvate and glyceraldehyde 3-phosphate to yield 1-deoxy-D-xylulose-5-phosphate (DXP). In Natranaerobius thermophilus (strain ATCC BAA-1301 / DSM 18059 / JW/NM-WN-LF), this protein is 1-deoxy-D-xylulose-5-phosphate synthase.